We begin with the raw amino-acid sequence, 776 residues long: Cilium assembly protein DZIP1L (776 aa).

The C2H2-type zinc-finger motif lies at 166–189 (HTCHLCDKTFMNATFLRGHIQRRH). Residues 196-450 (GKQKQEQQLG…RKVLAALRNN (255 aa)) are a coiled coil. A phosphoserine mark is found at Ser425 and Ser426. Positions 520 to 776 (SRAKKRWEGT…SGSRPRIPGW (257 aa)) are disordered. Residues 600–618 (GPSSTPVSPGPGLSTPPFS) are compositionally biased toward low complexity. Residues 652 to 683 (WSDSETSEESAQSPGKGSDGLASSATLVQSMV) are compositionally biased toward polar residues. Over residues 685-694 (NLEKQLETPA) the composition is skewed to basic and acidic residues. The span at 709–721 (TALQRSSTPARKT) shows a compositional bias: polar residues.

The protein belongs to the DZIP C2H2-type zinc-finger protein family. In terms of assembly, interacts with SEPTIN2.

It localises to the cytoplasm. It is found in the cytoskeleton. The protein resides in the cilium basal body. The protein localises to the microtubule organizing center. Its subcellular location is the centrosome. It localises to the centriole. Its function is as follows. Involved in primary cilium formation. Probably acts as a transition zone protein required for localization of PKD1/PC1 and PKD2/PC2 to the ciliary membrane. In Rattus norvegicus (Rat), this protein is Cilium assembly protein DZIP1L.